Consider the following 141-residue polypeptide: Putative pre-16S rRNA nuclease (141 aa).

The protein belongs to the YqgF nuclease family.

Its subcellular location is the cytoplasm. Its function is as follows. Could be a nuclease involved in processing of the 5'-end of pre-16S rRNA. In Aliivibrio fischeri (strain MJ11) (Vibrio fischeri), this protein is Putative pre-16S rRNA nuclease.